A 431-amino-acid polypeptide reads, in one-letter code: DNA polymerase delta subunit 2 (431 aa).

Belongs to the DNA polymerase delta/II small subunit family. Component of both the DNA polymerase delta and DNA polymerase zeta complexes. The DNA polymerase delta complex consisting of three subunits: the catalytic subunit PolD1 and two accessory subunits PolD2/Pol31 and PolD3/Pol32. Within the delta complex, interacts with both PolD1 and PolD3, and is able to interact with PolD1 in the absence of PolD3. Component of the DNA polymerase zeta complex consisting of four subunits: the catalytic subunit PolZ1 and three accessory subunits PolZ2/Rev7, PolD2/Pol31 and PolD3/Pol32. In terms of tissue distribution, expressed in ovaries and embryos (at the protein level).

The protein localises to the nucleus. Its subcellular location is the nucleoplasm. Functionally, accessory component of both the DNA polymerase delta complex and possibly the DNA polymerase zeta complex. As a component of the delta complex, participates in high fidelity genome replication, including lagging strand synthesis, DNA recombination and repair. Appears to promote the function of the DNA pol-delta complex accessory subunit PolD3 in both embryonic and postembryonic somatic cells. The sequence is that of DNA polymerase delta subunit 2 from Drosophila melanogaster (Fruit fly).